Here is a 217-residue protein sequence, read N- to C-terminus: Peptide methionine sulfoxide reductase MsrA (217 aa).

Cys54 is an active-site residue.

It belongs to the MsrA Met sulfoxide reductase family.

The enzyme catalyses L-methionyl-[protein] + [thioredoxin]-disulfide + H2O = L-methionyl-(S)-S-oxide-[protein] + [thioredoxin]-dithiol. It carries out the reaction [thioredoxin]-disulfide + L-methionine + H2O = L-methionine (S)-S-oxide + [thioredoxin]-dithiol. Functionally, has an important function as a repair enzyme for proteins that have been inactivated by oxidation. Catalyzes the reversible oxidation-reduction of methionine sulfoxide in proteins to methionine. The sequence is that of Peptide methionine sulfoxide reductase MsrA from Maricaulis maris (strain MCS10) (Caulobacter maris).